Reading from the N-terminus, the 393-residue chain is S-adenosylmethionine synthase (393 aa).

His-16 contributes to the ATP binding site. Asp-18 is a binding site for Mg(2+). Glu-44 is a binding site for K(+). L-methionine is bound by residues Glu-57 and Gln-100. Residues 100-110 (QSNDIAQGVDH) are flexible loop. Residues 167 to 169 (DAK), 238 to 239 (RF), Asp-247, 253 to 254 (RK), Ala-270, and Lys-274 each bind ATP. Asp-247 lines the L-methionine pocket. Lys-278 is a binding site for L-methionine.

This sequence belongs to the AdoMet synthase family. In terms of assembly, homotetramer; dimer of dimers. Mg(2+) serves as cofactor. Requires K(+) as cofactor.

The protein resides in the cytoplasm. It carries out the reaction L-methionine + ATP + H2O = S-adenosyl-L-methionine + phosphate + diphosphate. The protein operates within amino-acid biosynthesis; S-adenosyl-L-methionine biosynthesis; S-adenosyl-L-methionine from L-methionine: step 1/1. Catalyzes the formation of S-adenosylmethionine (AdoMet) from methionine and ATP. The overall synthetic reaction is composed of two sequential steps, AdoMet formation and the subsequent tripolyphosphate hydrolysis which occurs prior to release of AdoMet from the enzyme. This chain is S-adenosylmethionine synthase, found in Leptothrix cholodnii (strain ATCC 51168 / LMG 8142 / SP-6) (Leptothrix discophora (strain SP-6)).